Reading from the N-terminus, the 626-residue chain is Chaperone protein HtpG (626 aa).

The a; substrate-binding stretch occupies residues 1–343; that stretch reads MHKQTLSFQA…SADLPLNVSR (343 aa). The b stretch occupies residues 344–558; the sequence is ELLQESRAVK…DGDMSTQLAR (215 aa). Positions 559 to 626 are c; that stretch reads MLKQAGQAVP…YVKRVNALLV (68 aa).

Belongs to the heat shock protein 90 family. As to quaternary structure, homodimer.

It localises to the cytoplasm. In terms of biological role, molecular chaperone. Has ATPase activity. In Polaromonas sp. (strain JS666 / ATCC BAA-500), this protein is Chaperone protein HtpG.